The sequence spans 184 residues: ATP synthase subunit delta (184 aa).

This sequence belongs to the ATPase delta chain family. F-type ATPases have 2 components, F(1) - the catalytic core - and F(0) - the membrane proton channel. F(1) has five subunits: alpha(3), beta(3), gamma(1), delta(1), epsilon(1). F(0) has three main subunits: a(1), b(2) and c(10-14). The alpha and beta chains form an alternating ring which encloses part of the gamma chain. F(1) is attached to F(0) by a central stalk formed by the gamma and epsilon chains, while a peripheral stalk is formed by the delta and b chains.

The protein resides in the cell inner membrane. Functionally, f(1)F(0) ATP synthase produces ATP from ADP in the presence of a proton or sodium gradient. F-type ATPases consist of two structural domains, F(1) containing the extramembraneous catalytic core and F(0) containing the membrane proton channel, linked together by a central stalk and a peripheral stalk. During catalysis, ATP synthesis in the catalytic domain of F(1) is coupled via a rotary mechanism of the central stalk subunits to proton translocation. This protein is part of the stalk that links CF(0) to CF(1). It either transmits conformational changes from CF(0) to CF(1) or is implicated in proton conduction. This is ATP synthase subunit delta from Paramagnetospirillum magneticum (strain ATCC 700264 / AMB-1) (Magnetospirillum magneticum).